Consider the following 587-residue polypeptide: Leucine-rich repeat-containing protein 63 (587 aa).

LRR repeat units follow at residues 251–274, 344–367, 368–390, 392–413, 414–436, 437–459, and 487–510; these read QSVIETLVTENGNIESVPKQIPPR, AFQLIYLNLSFNDLHYFPTEILCL, KNLQILKLRNNPIKEIPSEIQQL, FLRIFTIAFNLITVLPIGLFSL, SYLEELDVSYNELTFIPNEIQKL, RSLEKLTVDGNELSFFPHGILKL, and LTQIISLFIVQNKLHKFYDKIPVE.

The sequence is that of Leucine-rich repeat-containing protein 63 (LRRC63) from Homo sapiens (Human).